The following is a 217-amino-acid chain: ATP-dependent Clp protease proteolytic subunit (217 aa).

The Nucleophile role is filled by Ser119. His144 is an active-site residue.

It belongs to the peptidase S14 family. Fourteen ClpP subunits assemble into 2 heptameric rings which stack back to back to give a disk-like structure with a central cavity, resembling the structure of eukaryotic proteasomes.

The protein localises to the cytoplasm. It catalyses the reaction Hydrolysis of proteins to small peptides in the presence of ATP and magnesium. alpha-casein is the usual test substrate. In the absence of ATP, only oligopeptides shorter than five residues are hydrolyzed (such as succinyl-Leu-Tyr-|-NHMec, and Leu-Tyr-Leu-|-Tyr-Trp, in which cleavage of the -Tyr-|-Leu- and -Tyr-|-Trp bonds also occurs).. Cleaves peptides in various proteins in a process that requires ATP hydrolysis. Has a chymotrypsin-like activity. Plays a major role in the degradation of misfolded proteins. This chain is ATP-dependent Clp protease proteolytic subunit, found in Bordetella bronchiseptica (strain ATCC BAA-588 / NCTC 13252 / RB50) (Alcaligenes bronchisepticus).